Here is a 1123-residue protein sequence, read N- to C-terminus: Nicotinic receptor-associated protein 4 (1123 aa).

The signal sequence occupies residues 1–18; sequence MGSLPLILLSLLLPGALA. Topologically, residues 19–1071 are lumenal; it reads NVYSCAGSVK…TSSKRANDVD (1053 aa). A helical membrane pass occupies residues 1072-1092; it reads ISVGTFLSLPFFVTLALVFFN. Topologically, residues 1093–1123 are cytoplasmic; sequence QNRVLELLGTFIDWARNTFAPTADNHHRKRK.

May interact with nra-2 in the ER. Expressed in body wall, pharyngeal, uterine and vulval muscles, motor neurons, nerve ring, motor and ventral cord neurons, hypodermal cells in the tail, vulval epithelium and intestine.

The protein resides in the endoplasmic reticulum membrane. Its function is as follows. Involved in the recognition and selection of protein complexes to exit the endoplasmic reticulum (ER). In muscles, regulates levamisole-sensitive nicotinic acetylcholine receptor (L-AChR) subunit composition, possibly by allowing only specific L-AChR subunit combinations to exit the ER. Specifically, may promote the inclusion of alpha subunit unc-38 into and the exclusion of unc-29 from L-AChR. Regulates L-AChR sensitivity to agonists such as nicotine and levamisole at neuro-muscular junctions. In Caenorhabditis elegans, this protein is Nicotinic receptor-associated protein 4.